Reading from the N-terminus, the 461-residue chain is Fibrinogen C domain-containing protein 1 (461 aa).

Positions M1–Q24 are disordered. Over M1 to C33 the chain is Cytoplasmic. The segment covering L15 to Q24 has biased composition (basic and acidic residues). The chain crosses the membrane as a helical; Signal-anchor for type II membrane protein span at residues T34 to L54. Residues N55–R461 lie on the Extracellular side of the membrane. The tract at residues G214 to G238 is disordered. The Fibrinogen C-terminal domain maps to C235–R458. Residues C244 and C273 are joined by a disulfide bond. N340 carries N-linked (GlcNAc...) asparagine glycosylation. Residues D393 and D395 each contribute to the Ca(2+) site. C401 and C414 are joined by a disulfide.

As to quaternary structure, homotetramer; disulfide-linked. Expressed in the small and large intestinal epithelial cells with a highly polarized localization to the apical surface corresponding to the brush border and in the ducts of the salivary gland.

It localises to the membrane. Functionally, acetyl group-binding receptor which shows a high-affinity and calcium-dependent binding to acetylated structures such as chitin, some N-acetylated carbohydrates, and amino acids, but not to their non-acetylated counterparts. Can facilitate the endocytosis of acetylated components. The sequence is that of Fibrinogen C domain-containing protein 1 (FIBCD1) from Homo sapiens (Human).